We begin with the raw amino-acid sequence, 435 residues long: MKTTYVNATIVTMNEQNEVIENGYIIVENDQIIDVKSGEFANDFEVDEVIDMKGKWVLPGLVNTHTHVVMSLLRGIGDDMLLQPWLETRIWPLESQFTPELAVASTELGLLEMVKSGTTSFSDMFNPIGVDQDAIMETVSRSGMRAAVSRTLFSFGTKDDEKKAIEEAEKYVKRYYKESGMLTTMVAPHSPYTCSTELLEECARIAVENQTMVHIHLSETEREVRDIEAQYGKRPVEYAASCGLFKRPTVIAHGVVLNENERAFLAEHDVRVAHNPNSNLKLGSGIANVKAMLEAGMKVGIATDSVASNNNLDMFEEMRIATLLQKGIHQDATALPVETALTLATKGAAEVIGMKQTGSLEVGKCADFITIDPSNKPHLQPADEVLSHLVYAASGKDISDVIINGKRVVWNGECKTLDEERIIFEASRYKRGLQR.

Residues His65 and His67 each coordinate Zn(2+). 3 residues coordinate substrate: Glu94, Arg150, and His189. Zn(2+) is bound at residue His216. Substrate is bound by residues Glu219 and Asp304. Asp304 provides a ligand contact to Zn(2+).

Belongs to the metallo-dependent hydrolases superfamily. MTA/SAH deaminase family. Requires Zn(2+) as cofactor.

The enzyme catalyses S-adenosyl-L-homocysteine + H2O + H(+) = S-inosyl-L-homocysteine + NH4(+). It carries out the reaction S-methyl-5'-thioadenosine + H2O + H(+) = S-methyl-5'-thioinosine + NH4(+). Functionally, catalyzes the deamination of 5-methylthioadenosine and S-adenosyl-L-homocysteine into 5-methylthioinosine and S-inosyl-L-homocysteine, respectively. Is also able to deaminate adenosine. The sequence is that of 5-methylthioadenosine/S-adenosylhomocysteine deaminase from Bacillus cereus (strain G9842).